A 357-amino-acid chain; its full sequence is Ribosomal RNA large subunit methyltransferase M (357 aa).

S-adenosyl-L-methionine contacts are provided by residues Ser183, 216–219 (APGG), Asp235, Asp255, and Asp271. Lys300 functions as the Proton acceptor in the catalytic mechanism.

Belongs to the class I-like SAM-binding methyltransferase superfamily. RNA methyltransferase RlmE family. RlmM subfamily. Monomer.

It is found in the cytoplasm. The catalysed reaction is cytidine(2498) in 23S rRNA + S-adenosyl-L-methionine = 2'-O-methylcytidine(2498) in 23S rRNA + S-adenosyl-L-homocysteine + H(+). In terms of biological role, catalyzes the 2'-O-methylation at nucleotide C2498 in 23S rRNA. The protein is Ribosomal RNA large subunit methyltransferase M of Pseudomonas syringae pv. syringae (strain B728a).